Here is a 271-residue protein sequence, read N- to C-terminus: GPN-loop GTPase 3 (271 aa).

Residue G13 to T18 coordinates GTP. The short motif at G70–N72 is the Gly-Pro-Asn (GPN)-loop; involved in dimer interface element. S173 to D176 lines the GTP pocket.

The protein belongs to the GPN-loop GTPase family. As to quaternary structure, heterodimers with GPN1 or GPN2. Binds to RNA polymerase II (RNAPII).

Its function is as follows. Small GTPase required for proper nuclear import of RNA polymerase II and III (RNAPII and RNAPIII). May act at an RNAP assembly step prior to nuclear import. The protein is GPN-loop GTPase 3 of Kluyveromyces lactis (strain ATCC 8585 / CBS 2359 / DSM 70799 / NBRC 1267 / NRRL Y-1140 / WM37) (Yeast).